The following is a 151-amino-acid chain: Nucleoside diphosphate kinase (151 aa).

Residues K11, F59, R87, T93, R104, and N114 each contribute to the ATP site. The active-site Pros-phosphohistidine intermediate is H117.

It belongs to the NDK family. In terms of assembly, homotetramer. The cofactor is Mg(2+).

It localises to the cytoplasm. The enzyme catalyses a 2'-deoxyribonucleoside 5'-diphosphate + ATP = a 2'-deoxyribonucleoside 5'-triphosphate + ADP. It catalyses the reaction a ribonucleoside 5'-diphosphate + ATP = a ribonucleoside 5'-triphosphate + ADP. Its function is as follows. Major role in the synthesis of nucleoside triphosphates other than ATP. The ATP gamma phosphate is transferred to the NDP beta phosphate via a ping-pong mechanism, using a phosphorylated active-site intermediate. This is Nucleoside diphosphate kinase from Prochlorococcus marinus (strain NATL1A).